The primary structure comprises 308 residues: Lipoyl synthase (308 aa).

Positions 51, 56, 62, 77, 81, 84, and 290 each coordinate [4Fe-4S] cluster. Residues 63–279 (WSKRHATFMI…ETIAKSKGFL (217 aa)) form the Radical SAM core domain.

Belongs to the radical SAM superfamily. Lipoyl synthase family. [4Fe-4S] cluster is required as a cofactor.

It is found in the cytoplasm. The enzyme catalyses [[Fe-S] cluster scaffold protein carrying a second [4Fe-4S](2+) cluster] + N(6)-octanoyl-L-lysyl-[protein] + 2 oxidized [2Fe-2S]-[ferredoxin] + 2 S-adenosyl-L-methionine + 4 H(+) = [[Fe-S] cluster scaffold protein] + N(6)-[(R)-dihydrolipoyl]-L-lysyl-[protein] + 4 Fe(3+) + 2 hydrogen sulfide + 2 5'-deoxyadenosine + 2 L-methionine + 2 reduced [2Fe-2S]-[ferredoxin]. Its pathway is protein modification; protein lipoylation via endogenous pathway; protein N(6)-(lipoyl)lysine from octanoyl-[acyl-carrier-protein]: step 2/2. In terms of biological role, catalyzes the radical-mediated insertion of two sulfur atoms into the C-6 and C-8 positions of the octanoyl moiety bound to the lipoyl domains of lipoate-dependent enzymes, thereby converting the octanoylated domains into lipoylated derivatives. The sequence is that of Lipoyl synthase from Pelagibacter ubique (strain HTCC1062).